A 442-amino-acid polypeptide reads, in one-letter code: ATP-dependent protease ATPase subunit HslU (442 aa).

Residues isoleucine 18, 60–65 (GVGKTE), aspartate 255, glutamate 320, and arginine 392 contribute to the ATP site.

The protein belongs to the ClpX chaperone family. HslU subfamily. In terms of assembly, a double ring-shaped homohexamer of HslV is capped on each side by a ring-shaped HslU homohexamer. The assembly of the HslU/HslV complex is dependent on binding of ATP.

Its subcellular location is the cytoplasm. ATPase subunit of a proteasome-like degradation complex; this subunit has chaperone activity. The binding of ATP and its subsequent hydrolysis by HslU are essential for unfolding of protein substrates subsequently hydrolyzed by HslV. HslU recognizes the N-terminal part of its protein substrates and unfolds these before they are guided to HslV for hydrolysis. In Shewanella putrefaciens (strain CN-32 / ATCC BAA-453), this protein is ATP-dependent protease ATPase subunit HslU.